Here is a 37-residue protein sequence, read N- to C-terminus: Large ribosomal subunit protein bL36 (37 aa).

This sequence belongs to the bacterial ribosomal protein bL36 family.

The chain is Large ribosomal subunit protein bL36 from Paracidovorax citrulli (strain AAC00-1) (Acidovorax citrulli).